A 210-amino-acid chain; its full sequence is MTTSSHHNKGDNSADLYLASQSPRRRELLAQIGVKVAVLSVDVAEQREVGESPAQYVQRLAYDKAMAGAKLAATQPRSLPCLGSDTIVVIENRVLEKPRDEEDGVAMLLALSGQTHQVMTAVAVATEAKQLMRLSVTDVTFREISRAEAIEYWRTGEPADKAGGYGIQGLGAVFVRELKGSYTAVVGLPLFETKTLLDAFEVPVWQNLAP.

The Proton acceptor role is filled by D85.

This sequence belongs to the Maf family. YhdE subfamily. A divalent metal cation serves as cofactor.

Its subcellular location is the cytoplasm. It carries out the reaction dTTP + H2O = dTMP + diphosphate + H(+). It catalyses the reaction UTP + H2O = UMP + diphosphate + H(+). Its function is as follows. Nucleoside triphosphate pyrophosphatase that hydrolyzes dTTP and UTP. May have a dual role in cell division arrest and in preventing the incorporation of modified nucleotides into cellular nucleic acids. The chain is dTTP/UTP pyrophosphatase from Saccharophagus degradans (strain 2-40 / ATCC 43961 / DSM 17024).